A 418-amino-acid polypeptide reads, in one-letter code: Serine hydroxymethyltransferase (418 aa).

(6S)-5,6,7,8-tetrahydrofolate-binding positions include L120 and 124–126 (GHL). At K229 the chain carries N6-(pyridoxal phosphate)lysine. 353-355 (SPF) serves as a coordination point for (6S)-5,6,7,8-tetrahydrofolate.

This sequence belongs to the SHMT family. Homodimer. The cofactor is pyridoxal 5'-phosphate.

Its subcellular location is the cytoplasm. The enzyme catalyses (6R)-5,10-methylene-5,6,7,8-tetrahydrofolate + glycine + H2O = (6S)-5,6,7,8-tetrahydrofolate + L-serine. It participates in one-carbon metabolism; tetrahydrofolate interconversion. The protein operates within amino-acid biosynthesis; glycine biosynthesis; glycine from L-serine: step 1/1. Functionally, catalyzes the reversible interconversion of serine and glycine with tetrahydrofolate (THF) serving as the one-carbon carrier. This reaction serves as the major source of one-carbon groups required for the biosynthesis of purines, thymidylate, methionine, and other important biomolecules. Also exhibits THF-independent aldolase activity toward beta-hydroxyamino acids, producing glycine and aldehydes, via a retro-aldol mechanism. The protein is Serine hydroxymethyltransferase of Psychrobacter cryohalolentis (strain ATCC BAA-1226 / DSM 17306 / VKM B-2378 / K5).